The sequence spans 664 residues: DNA primase (664 aa).

A CHC2-type zinc finger spans residues 40-64 (CPFHKEKTPSFTVSPDKQFYYCFGC). Residues 94-104 (GMDVPREERGG) show a composition bias toward basic and acidic residues. The segment at 94-115 (GMDVPREERGGRGHTPRQPTDS) is disordered. The Toprim domain maps to 262 to 344 (DEIMVVEGYM…GKRVRFLFLP (83 aa)). Positions 268, 312, and 314 each coordinate Mg(2+). The disordered stretch occupies residues 483–521 (PRKSWNKDKKPWDGKKWDGKKKWDKGGRGDFKAPQRTPV). Residues 487–515 (WNKDKKPWDGKKWDGKKKWDKGGRGDFKA) show a composition bias toward basic and acidic residues.

It belongs to the DnaG primase family. Monomer. Interacts with DnaB. It depends on Zn(2+) as a cofactor. The cofactor is Mg(2+).

The catalysed reaction is ssDNA + n NTP = ssDNA/pppN(pN)n-1 hybrid + (n-1) diphosphate.. Its function is as follows. RNA polymerase that catalyzes the synthesis of short RNA molecules used as primers for DNA polymerase during DNA replication. The polypeptide is DNA primase (Pseudomonas aeruginosa (strain ATCC 15692 / DSM 22644 / CIP 104116 / JCM 14847 / LMG 12228 / 1C / PRS 101 / PAO1)).